Consider the following 709-residue polypeptide: MLNPTVRKFQYGQHTVTLETGMMARQATAAVMVDMDGTAVFVTVVAKKKVKEGQDFFPLTVNYQERSYAAGRIPGSFFRREGRPGEGETLIARLIDRPLRPLFPEGFLNEIQVVATVVSVNPQVNPDIVAMIGASAALSLSGVPFNGPIGGARVGFIDGQYVLNPTVDELKISKLDLVVAGTAGAVLMVESEADLLSEEQMLGAVVFGHEQQQVVIENINALVAEVGKEKWDWAPEPINQSLHDRIAQLAQTRIGDAYRITEKQERYEQIDAIRDEVISTLLAEDESLDEGEIIEIFSGLEKKIVRARVLAGEPRIDGREKDMVRALDIRTGLLPRTHGSALFTRGETQALVTATLGTARDAQTIDDIMGEHTDTFLLHYNFPPYSVGETGMMGSPKRREIGHGRLAKRGVLAVMPTIEEFPYTVRVVSEITESNGSSSMASVCGASLALMDAGVPIKESVAGIAMGLVKEGENFVVLSDILGDEDHLGDMDFKVAGSRNGVSALQMDIKIEGITREIMQVALNQAKSARLHILGVMESAISQPRAEISEFAPRIHTIKINADKIKDVIGKGGSVIRALTEETGTTIEIEDDGTVKIAATSGEQAKQAIARIEEITAEVEVGRIYNGKVTRIVDFGAFVAIGGGKEGLVHISQIADKRVEKVSDYLTMGQEVPVKVLEIDRQGRIRLSMKEAQATQQEAAETSSEDPAN.

Residues Asp486 and Asp492 each contribute to the Mg(2+) site. Positions 553–612 (PRIHTIKINADKIKDVIGKGGSVIRALTEETGTTIEIEDDGTVKIAATSGEQAKQAIARI) constitute a KH domain. Residues 622 to 690 (GRIYNGKVTR…RQGRIRLSMK (69 aa)) enclose the S1 motif domain. Residues 690–709 (KEAQATQQEAAETSSEDPAN) form a disordered region. Positions 691 to 702 (EAQATQQEAAET) are enriched in low complexity.

The protein belongs to the polyribonucleotide nucleotidyltransferase family. In terms of assembly, component of the RNA degradosome, which is a multiprotein complex involved in RNA processing and mRNA degradation. Requires Mg(2+) as cofactor.

The protein localises to the cytoplasm. The catalysed reaction is RNA(n+1) + phosphate = RNA(n) + a ribonucleoside 5'-diphosphate. Its function is as follows. Involved in mRNA degradation. Catalyzes the phosphorolysis of single-stranded polyribonucleotides processively in the 3'- to 5'-direction. This Proteus mirabilis (strain HI4320) protein is Polyribonucleotide nucleotidyltransferase.